A 213-amino-acid polypeptide reads, in one-letter code: Large ribosomal subunit protein uL23 (213 aa).

Residues 1-117 (MNHNEIIKYP…KSTSELKLEE (117 aa)) form a large ribosomal subunit protein uL23 region. Residues 118 to 213 (KIAAKIAAKE…TTKKTTTKKV (96 aa)) are unknown.

Belongs to the universal ribosomal protein uL23 family. Part of the 50S ribosomal subunit. Contacts protein L29, and trigger factor when it is bound to the ribosome.

Functionally, one of the early assembly proteins it binds 23S rRNA. One of the proteins that surrounds the polypeptide exit tunnel on the outside of the ribosome. Forms the main docking site for trigger factor binding to the ribosome. This is Large ribosomal subunit protein uL23 from Mycoplasma mobile (strain ATCC 43663 / 163K / NCTC 11711) (Mesomycoplasma mobile).